Reading from the N-terminus, the 441-residue chain is MTSSVWQERRHGEDKQRRNDHRSPYQRDRARILHSAAFRRLQAKTQVLGVGMNDFYRTRLTHSLEVSQIGTGIAAQLSRKYPEHKPLLDSMSLLESLCLAHDIGHPPFGHGGEVALNYMMRHHGGFEGNGQTFRILSKLEPYTLDFGMNLCRRTMLGILKYPAPQSSLFIAGNHHEITNHRQLKPSQWPPVKGIFDDDNDIFDWVLEPLSAADRTRFTSAQPSIQPNYPHLRTQFKSFDCSIMELADDIAYAVHDLEDAIVMGIVTASQWQQDVAPTFEHSNDPWIRQELADIGTKLFSHEHHLRKDAIGTLVNGFVTAIIITDDGVFEEPLLRFNASLEVEFAHALNVLKQLVYKYVIRKPEIQMLEYKGQQIVMGLFEAFASDPERLLPLNTQERWRASEQLGLNSHRILADYISGMTDEFAGRLYQQLFTLRLDRTWS.

The interval 1-27 is disordered; sequence MTSSVWQERRHGEDKQRRNDHRSPYQR. Residues 7-27 show a composition bias toward basic and acidic residues; that stretch reads QERRHGEDKQRRNDHRSPYQR. An HD domain is found at 59-252; that stretch reads RLTHSLEVSQ…MELADDIAYA (194 aa).

Belongs to the dGTPase family. Type 2 subfamily.

This Shewanella oneidensis (strain ATCC 700550 / JCM 31522 / CIP 106686 / LMG 19005 / NCIMB 14063 / MR-1) protein is Deoxyguanosinetriphosphate triphosphohydrolase-like protein.